The sequence spans 500 residues: Cytosol aminopeptidase (500 aa).

2 residues coordinate Mn(2+): Lys-265 and Asp-270. The active site involves Lys-277. Asp-288, Asp-347, and Glu-349 together coordinate Mn(2+). The active site involves Arg-351.

The protein belongs to the peptidase M17 family. It depends on Mn(2+) as a cofactor.

It is found in the cytoplasm. It catalyses the reaction Release of an N-terminal amino acid, Xaa-|-Yaa-, in which Xaa is preferably Leu, but may be other amino acids including Pro although not Arg or Lys, and Yaa may be Pro. Amino acid amides and methyl esters are also readily hydrolyzed, but rates on arylamides are exceedingly low.. The enzyme catalyses Release of an N-terminal amino acid, preferentially leucine, but not glutamic or aspartic acids.. Its function is as follows. Presumably involved in the processing and regular turnover of intracellular proteins. Catalyzes the removal of unsubstituted N-terminal amino acids from various peptides. The sequence is that of Cytosol aminopeptidase (pepA) from Rickettsia prowazekii (strain Madrid E).